A 413-amino-acid polypeptide reads, in one-letter code: 1-deoxy-D-xylulose 5-phosphate reductoisomerase (413 aa).

7 residues coordinate NADPH: Thr13, Gly14, Ser15, Ile16, Arg40, Asn41, and Asn127. Residue Lys128 coordinates 1-deoxy-D-xylulose 5-phosphate. Position 129 (Glu129) interacts with NADPH. Position 153 (Asp153) interacts with Mn(2+). 1-deoxy-D-xylulose 5-phosphate-binding residues include Ser154, Glu155, Ser184, and His207. Residue Glu155 participates in Mn(2+) binding. Gly213 serves as a coordination point for NADPH. 1-deoxy-D-xylulose 5-phosphate contacts are provided by Ser220, Asn225, Lys226, and Glu229. Glu229 contributes to the Mn(2+) binding site.

Belongs to the DXR family. Mg(2+) is required as a cofactor. Requires Mn(2+) as cofactor.

It carries out the reaction 2-C-methyl-D-erythritol 4-phosphate + NADP(+) = 1-deoxy-D-xylulose 5-phosphate + NADPH + H(+). Its pathway is isoprenoid biosynthesis; isopentenyl diphosphate biosynthesis via DXP pathway; isopentenyl diphosphate from 1-deoxy-D-xylulose 5-phosphate: step 1/6. Functionally, catalyzes the NADPH-dependent rearrangement and reduction of 1-deoxy-D-xylulose-5-phosphate (DXP) to 2-C-methyl-D-erythritol 4-phosphate (MEP). The polypeptide is 1-deoxy-D-xylulose 5-phosphate reductoisomerase (Nitrosomonas europaea (strain ATCC 19718 / CIP 103999 / KCTC 2705 / NBRC 14298)).